A 322-amino-acid chain; its full sequence is Ferredoxin--NADP reductase (322 aa).

FAD is bound by residues Asp34, Gln42, Tyr47, Val87, Phe120, Asp279, and Thr320.

The protein belongs to the ferredoxin--NADP reductase type 2 family. In terms of assembly, homodimer. Requires FAD as cofactor.

It carries out the reaction 2 reduced [2Fe-2S]-[ferredoxin] + NADP(+) + H(+) = 2 oxidized [2Fe-2S]-[ferredoxin] + NADPH. The sequence is that of Ferredoxin--NADP reductase from Streptococcus sanguinis (strain SK36).